A 475-amino-acid chain; its full sequence is Probable GABA permease (475 aa).

Transmembrane regions (helical) follow at residues 27–47, 48–68, 105–125, 127–147, 163–183, 211–231, 250–270, 296–316, 345–365, 368–388, 413–433, and 438–458; these read VTML…SGHA, IAAA…LVVL, LYWW…AAIL, AWFP…LLTV, FALL…VAIV, AVLG…IVTI, VIWR…SIVP, LIVD…AIYT, PAVL…YFAP, VFTF…LVIA, PWLT…MLIM, and HEVF…LLNA.

This sequence belongs to the amino acid-polyamine-organocation (APC) superfamily. Amino acid transporter (AAT) (TC 2.A.3.1) family.

The protein resides in the membrane. Its function is as follows. Involved in the degradation of beta-alanine. In Pseudomonas aeruginosa (strain ATCC 15692 / DSM 22644 / CIP 104116 / JCM 14847 / LMG 12228 / 1C / PRS 101 / PAO1), this protein is Probable GABA permease (bauD).